We begin with the raw amino-acid sequence, 565 residues long: Sensor histidine kinase MtrB (565 aa).

Positions 1-13 are enriched in basic residues; that stretch reads MMWGSRRRTRSRW. The segment at 1–21 is disordered; that stretch reads MMWGSRRRTRSRWGRSGPMTR. 2 helical membrane passes run 42–62 and 213–233; these read VVAL…FVLT and GTMI…ALLV. An HAMP domain is found at 235–287; sequence RQVVVPVRSASRIAERFAEGHLSERMPVRGEDDMARLAMSFNDMAESLSRQIT. Residues 302-519 enclose the Histidine kinase domain; it reads DVSHELRTPL…CFRLTLPLVR (218 aa). H305 carries the post-translational modification Phosphohistidine; by autocatalysis. Residues 524 to 565 form a disordered region; the sequence is TTSPLPMKPIPQPSPSGGQSPSTGPQHAKDRARQREHAERSL. A compositionally biased stretch (low complexity) spans 538–549; it reads PSGGQSPSTGPQ. The span at 550 to 565 shows a compositional bias: basic and acidic residues; that stretch reads HAKDRARQREHAERSL.

It localises to the cell membrane. It carries out the reaction ATP + protein L-histidine = ADP + protein N-phospho-L-histidine.. Member of the two-component regulatory system MtrA/MtrB. Seems to function as a membrane-associated protein kinase that phosphorylates MtrA in response to environmental signals. The chain is Sensor histidine kinase MtrB (mtrB) from Mycolicibacterium paratuberculosis (strain ATCC BAA-968 / K-10) (Mycobacterium paratuberculosis).